A 250-amino-acid chain; its full sequence is Ino eighty subunit 3 (250 aa).

The interval 29 to 70 (PDFLEKDPHHKKFHNADGLNQQGSSTPSTATDANAASTASTH) is disordered. A compositionally biased stretch (low complexity) spans 52 to 70 (SSTPSTATDANAASTASTH). Phosphoserine occurs at positions 157 and 211.

In terms of assembly, component of the chromatin-remodeling INO80 complex, at least composed of ARP4, ARP5, ARP8, RVB1, RVB2, TAF14, NHP10, IES1, IES3, IES4, IES6, ACT1, IES2, IES5 and INO80.

It localises to the nucleus. Probably involved in transcription regulation via its interaction with the INO80 complex, a chromatin-remodeling complex. This is Ino eighty subunit 3 (IES3) from Saccharomyces cerevisiae (strain ATCC 204508 / S288c) (Baker's yeast).